The following is an 88-amino-acid chain: Large ribosomal subunit protein bL27 (88 aa).

Positions Met-1–Arg-25 are disordered.

Belongs to the bacterial ribosomal protein bL27 family.

In Corynebacterium diphtheriae (strain ATCC 700971 / NCTC 13129 / Biotype gravis), this protein is Large ribosomal subunit protein bL27.